Here is a 202-residue protein sequence, read N- to C-terminus: uncharacterized protein (202 aa).

Positions 1–19 (MRRKNGFSVASVFILCSIA) are cleaved as a signal peptide. A helical membrane pass occupies residues 177 to 199 (FLASSSSSFSSFLPSIAIILFFV).

It localises to the membrane. This is an uncharacterized protein from Caenorhabditis elegans.